Here is a 351-residue protein sequence, read N- to C-terminus: NAD-dependent protein deacetylase SIR2rp1 (351 aa).

Residues 10–325 (HVVGEPTFEG…RSFAQALGFG (316 aa)) enclose the Deacetylase sirtuin-type domain. NAD(+)-binding positions include 37 to 57 (GAGI…TGLY) and 122 to 125 (QNID). Residue H142 is the Proton acceptor of the active site. Zn(2+) contacts are provided by C150, C153, C174, and C177. NAD(+)-binding positions include 213 to 215 (GTS) and 238 to 240 (NLE). The tract at residues 260-284 (SSYRLSTGNGNGSKISSGDSSNSSS) is disordered. Low complexity predominate over residues 265 to 284 (STGNGNGSKISSGDSSNSSS). C311 is a binding site for NAD(+).

The protein belongs to the sirtuin family. Class I subfamily. Requires Zn(2+) as cofactor.

It is found in the nucleus. The protein localises to the chromosome. It localises to the telomere. The catalysed reaction is N(6)-acetyl-L-lysyl-[protein] + NAD(+) + H2O = 2''-O-acetyl-ADP-D-ribose + nicotinamide + L-lysyl-[protein]. In terms of biological role, NAD-dependent protein deacetylase, which is involved in repression of RNA polymerase I-mediated expression immediately adjacent to telomeres. It is however not involved in antigenic variation and subtelomeric variant surface glycoprotein (VSG) gene silencing. Plays a role in DNA damage response. Also has ADP-ribosylation activity in vitro. This Trypanosoma brucei brucei (strain 927/4 GUTat10.1) protein is NAD-dependent protein deacetylase SIR2rp1 (SIR2rp1).